A 376-amino-acid polypeptide reads, in one-letter code: NifS-like protein (376 aa).

Residues 58 to 59 (SE) and 184 to 186 (SLN) each bind pyridoxal 5'-phosphate.

It belongs to the class-V pyridoxal-phosphate-dependent aminotransferase family. NifS/IscS subfamily. The cofactor is pyridoxal 5'-phosphate.

It localises to the virion. This chain is NifS-like protein, found in African swine fever virus (isolate Tick/Malawi/Lil 20-1/1983) (ASFV).